Here is a 242-residue protein sequence, read N- to C-terminus: tRNA pseudouridine synthase A (242 aa).

Catalysis depends on Asp-51, which acts as the Nucleophile. A substrate-binding site is contributed by Tyr-107.

It belongs to the tRNA pseudouridine synthase TruA family. In terms of assembly, homodimer.

It carries out the reaction uridine(38/39/40) in tRNA = pseudouridine(38/39/40) in tRNA. Formation of pseudouridine at positions 38, 39 and 40 in the anticodon stem and loop of transfer RNAs. The chain is tRNA pseudouridine synthase A from Helicobacter pylori (strain HPAG1).